The primary structure comprises 176 residues: Scytalone dehydratase-like protein AacuK (176 aa).

Substrate is bound by residues Tyr26 and Tyr46. Catalysis depends on residues His81 and His107.

The protein belongs to the scytalone dehydratase family.

It functions in the pathway secondary metabolite biosynthesis. Functionally, scytalone dehydratase-like protein; part of the gene cluster that mediates the biosynthesis of the tetrahydroxanthone dimer secalonic acid D. The pathway begins with the synthesis of atrochrysone thioester by the polyketide synthase AacuL. The atrochrysone carboxyl ACP thioesterase AacuM then breaks the thioester bond and releases the atrochrysone carboxylic acid from AacuL. Atrochrysone carboxylic acid is decarboxylated by the decarboxylase AacuI, and oxidized by the anthrone oxygenase AacuG to yield emodin. Emodin is then reduced to emodin hydroquinone by a yet unidentified oxidoreductase. A-ring reduction by the short chain dehydrogenase AacuN, dehydration by the scytalone dehydratase-like protein AacuK and probable spontaneous re-oxidation, results in overall deoxygenation to chrysophanol. Baeyer-Villiger oxidation by the Baeyer-Villiger monooxygenase (BVMO) AacuH then yields monodictyphenone. Monodictyphenone is transformed into compounds with the tetrahydroxanthone skeleton via methylesterification by the methyltransferase AacuQ, followed by the action of the flavin-dependent monooxygenase AacuC, the isomerase AacuP, and the short chain dehydrogenase/reductase AacuF or AacuD. AacuF and AacuD should accept the same compound as a substrate but perform the ketoreduction with a different stereoselectivity, thus yielding blennolides B and A, respectively. In the final step of the biosynthesis, the cytochrome P450 monooxygenase AacuE accepts blennolide B and/or blennolide A to conduct the dimerization reaction to furnish the tetrahydroxanthone dimers, secalonic acids D, B, and F. The sequence is that of Scytalone dehydratase-like protein AacuK from Aspergillus aculeatus (strain ATCC 16872 / CBS 172.66 / WB 5094).